The chain runs to 251 residues: SRR1-like protein (251 aa).

The protein belongs to the SRR1 family.

Its subcellular location is the cytoplasm. It localises to the nucleus. The protein is SRR1-like protein of Schizosaccharomyces pombe (strain 972 / ATCC 24843) (Fission yeast).